The sequence spans 114 residues: T cell receptor beta variable 5-5 (114 aa).

A signal peptide spans 1-21 (MGPGLLCWVLLCLLGAGPVDA). The Ig-like domain occupies 22–114 (GVTQSPTHLI…SALYLCASSL (93 aa)). C42 and C110 are oxidised to a cystine. An N-linked (GlcNAc...) asparagine glycan is attached at N90.

As to quaternary structure, alpha-beta TR is a heterodimer composed of an alpha and beta chain; disulfide-linked. The alpha-beta TR is associated with the transmembrane signaling CD3 coreceptor proteins to form the TR-CD3 (TcR or TCR). The assembly of alpha-beta TR heterodimers with CD3 occurs in the endoplasmic reticulum where a single alpha-beta TR heterodimer associates with one CD3D-CD3E heterodimer, one CD3G-CD3E heterodimer and one CD247 homodimer forming a stable octameric structure. CD3D-CD3E and CD3G-CD3E heterodimers preferentially associate with TR alpha and TR beta chains, respectively. The association of the CD247 homodimer is the last step of TcR assembly in the endoplasmic reticulum and is required for transport to the cell surface.

The protein resides in the cell membrane. V region of the variable domain of T cell receptor (TR) beta chain that participates in the antigen recognition. Alpha-beta T cell receptors are antigen specific receptors which are essential to the immune response and are present on the cell surface of T lymphocytes. Recognize peptide-major histocompatibility (MH) (pMH) complexes that are displayed by antigen presenting cells (APC), a prerequisite for efficient T cell adaptive immunity against pathogens. Binding of alpha-beta TR to pMH complex initiates TR-CD3 clustering on the cell surface and intracellular activation of LCK that phosphorylates the ITAM motifs of CD3G, CD3D, CD3E and CD247 enabling the recruitment of ZAP70. In turn ZAP70 phosphorylates LAT, which recruits numerous signaling molecules to form the LAT signalosome. The LAT signalosome propagates signal branching to three major signaling pathways, the calcium, the mitogen-activated protein kinase (MAPK) kinase and the nuclear factor NF-kappa-B (NF-kB) pathways, leading to the mobilization of transcription factors that are critical for gene expression and essential for T cell growth and differentiation. The T cell repertoire is generated in the thymus, by V-(D)-J rearrangement. This repertoire is then shaped by intrathymic selection events to generate a peripheral T cell pool of self-MH restricted, non-autoaggressive T cells. Post-thymic interaction of alpha-beta TR with the pMH complexes shapes TR structural and functional avidity. The sequence is that of T cell receptor beta variable 5-5 from Homo sapiens (Human).